Here is a 333-residue protein sequence, read N- to C-terminus: Mitochondrial fission regulator 1 (333 aa).

Phosphoserine is present on Ser-119. The span at 286–307 (YRSDSQDEVEKGVPKSESEATS) shows a compositional bias: basic and acidic residues. The disordered stretch occupies residues 286–315 (YRSDSQDEVEKGVPKSESEATSERVLFGPH).

Belongs to the MTFR1 family.

It is found in the mitochondrion. Functionally, may play a role in mitochondrial aerobic respiration. May also regulate mitochondrial organization and fission. The sequence is that of Mitochondrial fission regulator 1 (MTFR1) from Pongo abelii (Sumatran orangutan).